We begin with the raw amino-acid sequence, 260 residues long: Troponin I 3 (260 aa).

A compositionally biased stretch (basic and acidic residues) spans 192-219 (DLDEIMAKKKGTADGKPEWSKKEKKEEE). The segment at 192–260 (DLDEIMAKKK…EEEEEEEEEE (69 aa)) is disordered. The segment covering 231 to 260 (PEAEPEPEAAEPAAEEPEAEEEEEEEEEEE) has biased composition (acidic residues).

The protein belongs to the troponin I family. In terms of tissue distribution, expressed in body wall muscle from first larval stage to adult. In adults expression is predominantly in vulval and anal muscles, body wall muscle expression is weaker. Also expressed in vulval muscles of hermaphrodites and the sex muscles of males.

In terms of biological role, troponin I is the inhibitory subunit of troponin, the thin filament regulatory complex which confers calcium-sensitivity to muscle actomyosin ATPase activity. This Caenorhabditis elegans protein is Troponin I 3 (tni-3).